A 251-amino-acid chain; its full sequence is Putative integrase/recombinase y4eF (251 aa).

Residues 1–40 (MLGREDIRTYQVYLANEKKLAPGSIHIALSALRFFFNVTL) enclose the Core-binding (CB) domain. The region spanning 58–231 (KLPIILSPDE…ATNKVCATES (174 aa)) is the Tyr recombinase domain. Active-site residues include R93, K118, H183, R186, and H209. The active-site O-(3'-phospho-DNA)-tyrosine intermediate is Y218.

It belongs to the 'phage' integrase family.

In Sinorhizobium fredii (strain NBRC 101917 / NGR234), this protein is Putative integrase/recombinase y4eF.